Reading from the N-terminus, the 102-residue chain is Bowman-Birk type wound-induced proteinase inhibitor WIP1 (102 aa).

An N-terminal signal peptide occupies residues 1–15 (MKSSPHLVLILCLQA). 5 disulfide bridges follow: C46–C102, C47–C60, C50–C98, C67–C74, and C71–C90.

The protein belongs to the Bowman-Birk serine protease inhibitor family.

The sequence is that of Bowman-Birk type wound-induced proteinase inhibitor WIP1 (WIP1) from Zea mays (Maize).